A 407-amino-acid polypeptide reads, in one-letter code: Phosphopentomutase (407 aa).

Residues D10, D306, H311, D347, H348, and H359 each coordinate Mn(2+).

It belongs to the phosphopentomutase family. Mn(2+) serves as cofactor.

The protein resides in the cytoplasm. The enzyme catalyses 2-deoxy-alpha-D-ribose 1-phosphate = 2-deoxy-D-ribose 5-phosphate. It carries out the reaction alpha-D-ribose 1-phosphate = D-ribose 5-phosphate. It functions in the pathway carbohydrate degradation; 2-deoxy-D-ribose 1-phosphate degradation; D-glyceraldehyde 3-phosphate and acetaldehyde from 2-deoxy-alpha-D-ribose 1-phosphate: step 1/2. Its function is as follows. Isomerase that catalyzes the conversion of deoxy-ribose 1-phosphate (dRib-1-P) and ribose 1-phosphate (Rib-1-P) to deoxy-ribose 5-phosphate (dRib-5-P) and ribose 5-phosphate (Rib-5-P), respectively. This Shigella boydii serotype 18 (strain CDC 3083-94 / BS512) protein is Phosphopentomutase.